The sequence spans 377 residues: MTHDLAASGLRFGIEEEFFLLDASDLDIVRSAPAGFVAACRDTLGEHFAEEMFECQVEVASPVFSTLAEAARFHGQARQRLAHLAMDFGLRSLCVGTHPFADWRRARSNPAAHFARLFEDQGRVARRSLVCGLHVHVEIPPSHDRMAVLQRVLPWLPLLLALSASSPFRGGRRSGLASYRRALCGEWPRMNIPPALPDEDAYRRHLALLRETGCIREDGQVWWMIRPSSHVPTLELRICDACPRLADALSLAGLFRALVGEALGADPRALPVARDACLEENYWQALRYGCAGRYLVEGRCVGAGDWLEMAWRQCRPQARQGNEWAYQHACGLLEETSAARQLRRYRRLREAGQERHPALRRLVEELLEENLQPALAG.

It belongs to the glutamate--cysteine ligase type 2 family. YbdK subfamily.

It carries out the reaction L-cysteine + L-glutamate + ATP = gamma-L-glutamyl-L-cysteine + ADP + phosphate + H(+). In terms of biological role, ATP-dependent carboxylate-amine ligase which exhibits weak glutamate--cysteine ligase activity. The chain is Putative glutamate--cysteine ligase 2 from Pseudomonas aeruginosa (strain ATCC 15692 / DSM 22644 / CIP 104116 / JCM 14847 / LMG 12228 / 1C / PRS 101 / PAO1).